We begin with the raw amino-acid sequence, 36 residues long: Photosystem I reaction center subunit VIII (36 aa).

The helical transmembrane segment at 8–28 (SILVPLVGLVFPAIAMASLFL) threads the bilayer.

It belongs to the PsaI family.

It is found in the plastid. The protein resides in the chloroplast thylakoid membrane. May help in the organization of the PsaL subunit. The polypeptide is Photosystem I reaction center subunit VIII (Vitis vinifera (Grape)).